The sequence spans 616 residues: Chaperone protein DnaK (616 aa).

Threonine 174 carries the phosphothreonine; by autocatalysis modification. The interval glutamine 576–threonine 616 is disordered. A compositionally biased stretch (gly residues) spans glycine 583–glycine 593.

This sequence belongs to the heat shock protein 70 family.

Functionally, acts as a chaperone. In Heliobacterium modesticaldum (strain ATCC 51547 / Ice1), this protein is Chaperone protein DnaK.